A 355-amino-acid chain; its full sequence is Phosphoserine aminotransferase (355 aa).

L-glutamate is bound at residue Arg41. Pyridoxal 5'-phosphate is bound by residues 75 to 76 (AS), Trp99, Thr147, Asp166, and Gln189. Lys190 carries the post-translational modification N6-(pyridoxal phosphate)lysine. 231 to 232 (NT) provides a ligand contact to pyridoxal 5'-phosphate.

Belongs to the class-V pyridoxal-phosphate-dependent aminotransferase family. SerC subfamily. Homodimer. The cofactor is pyridoxal 5'-phosphate.

Its subcellular location is the cytoplasm. The catalysed reaction is O-phospho-L-serine + 2-oxoglutarate = 3-phosphooxypyruvate + L-glutamate. It carries out the reaction 4-(phosphooxy)-L-threonine + 2-oxoglutarate = (R)-3-hydroxy-2-oxo-4-phosphooxybutanoate + L-glutamate. Its pathway is amino-acid biosynthesis; L-serine biosynthesis; L-serine from 3-phospho-D-glycerate: step 2/3. It participates in cofactor biosynthesis; pyridoxine 5'-phosphate biosynthesis; pyridoxine 5'-phosphate from D-erythrose 4-phosphate: step 3/5. Functionally, catalyzes the reversible conversion of 3-phosphohydroxypyruvate to phosphoserine and of 3-hydroxy-2-oxo-4-phosphonooxybutanoate to phosphohydroxythreonine. In Bacteroides thetaiotaomicron (strain ATCC 29148 / DSM 2079 / JCM 5827 / CCUG 10774 / NCTC 10582 / VPI-5482 / E50), this protein is Phosphoserine aminotransferase.